Here is a 654-residue protein sequence, read N- to C-terminus: Acetyl-coenzyme A synthetase (654 aa).

CoA-binding positions include 196–199 (RGGK) and T316. Residues 392-394 (GEP), 416-421 (DTWWQT), D507, and R522 contribute to the ATP site. Residue S530 participates in CoA binding. R533 lines the ATP pocket. Residues V544 and V549 each coordinate Mg(2+). At K619 the chain carries N6-acetyllysine.

This sequence belongs to the ATP-dependent AMP-binding enzyme family. Requires Mg(2+) as cofactor. Post-translationally, acetylated. Deacetylation by the SIR2-homolog deacetylase activates the enzyme.

It catalyses the reaction acetate + ATP + CoA = acetyl-CoA + AMP + diphosphate. In terms of biological role, catalyzes the conversion of acetate into acetyl-CoA (AcCoA), an essential intermediate at the junction of anabolic and catabolic pathways. AcsA undergoes a two-step reaction. In the first half reaction, AcsA combines acetate with ATP to form acetyl-adenylate (AcAMP) intermediate. In the second half reaction, it can then transfer the acetyl group from AcAMP to the sulfhydryl group of CoA, forming the product AcCoA. This Chromobacterium violaceum (strain ATCC 12472 / DSM 30191 / JCM 1249 / CCUG 213 / NBRC 12614 / NCIMB 9131 / NCTC 9757 / MK) protein is Acetyl-coenzyme A synthetase.